The chain runs to 798 residues: Translation initiation factor IF-2 (798 aa).

Positions 40 to 207 are disordered; that stretch reads SEQETKLRQA…QQESAKPAVP (168 aa). The span at 57–186 shows a compositional bias: low complexity; the sequence is NTQSKATNNQ…RNNFNNQNRN (130 aa). Basic residues predominate over residues 187-196; the sequence is RFNKKGKKGK. The tr-type G domain occupies 300–469; it reads TRPPVVTIMG…LLIAEVEDLK (170 aa). Residues 309-316 form a G1 region; sequence GHVDHGKT. 309–316 is a GTP binding site; the sequence is GHVDHGKT. The tract at residues 334–338 is G2; sequence GITQH. The G3 stretch occupies residues 355–358; the sequence is DTPG. GTP-binding positions include 355 to 359 and 409 to 412; these read DTPGH and NKID. The segment at 409-412 is G4; it reads NKID. Residues 445 to 447 form a G5 region; the sequence is SAK.

This sequence belongs to the TRAFAC class translation factor GTPase superfamily. Classic translation factor GTPase family. IF-2 subfamily.

It localises to the cytoplasm. Functionally, one of the essential components for the initiation of protein synthesis. Protects formylmethionyl-tRNA from spontaneous hydrolysis and promotes its binding to the 30S ribosomal subunits. Also involved in the hydrolysis of GTP during the formation of the 70S ribosomal complex. This chain is Translation initiation factor IF-2, found in Enterococcus faecalis (strain ATCC 700802 / V583).